The chain runs to 395 residues: Putative pyridoxal phosphate-dependent acyltransferase (395 aa).

110–111 contacts pyridoxal 5'-phosphate; the sequence is GF. Histidine 135 is a binding site for substrate. Residues serine 185, 210 to 213, and 240 to 243 contribute to the pyridoxal 5'-phosphate site; these read DDAH and TLSK. At lysine 243 the chain carries N6-(pyridoxal phosphate)lysine. Threonine 357 is a binding site for substrate.

This sequence belongs to the class-II pyridoxal-phosphate-dependent aminotransferase family. As to quaternary structure, homodimer. Pyridoxal 5'-phosphate is required as a cofactor.

In Staphylococcus aureus (strain COL), this protein is Putative pyridoxal phosphate-dependent acyltransferase.